The sequence spans 157 residues: Large ribosomal subunit protein bL34c (157 aa).

Residues 1 to 97 (MASLSTSVVA…GQRRRGLVVR (97 aa)) constitute a chloroplast transit peptide.

The protein belongs to the bacterial ribosomal protein bL34 family. In terms of assembly, part of the 50S ribosomal subunit.

The protein localises to the plastid. The protein resides in the chloroplast. Its function is as follows. This protein binds directly to 23S ribosomal RNA. The protein is Large ribosomal subunit protein bL34c (RPL34) of Arabidopsis thaliana (Mouse-ear cress).